The chain runs to 404 residues: Glucose-1-phosphate adenylyltransferase (404 aa).

Alpha-D-glucose 1-phosphate is bound by residues tyrosine 99, glycine 164, 179–180 (EK), and serine 197.

This sequence belongs to the bacterial/plant glucose-1-phosphate adenylyltransferase family.

The enzyme catalyses alpha-D-glucose 1-phosphate + ATP + H(+) = ADP-alpha-D-glucose + diphosphate. It participates in capsule biogenesis; capsule polysaccharide biosynthesis. The protein operates within glycan biosynthesis; glycogen biosynthesis. Its function is as follows. Involved in the biosynthesis of ADP-glucose, a building block, required in the biosynthesis of maltose-1-phosphate (M1P) and in the elongation reactions to produce linear alpha-1,4-glucans. Catalyzes the reaction between ATP and alpha-D-glucose 1-phosphate (G1P) to produce pyrophosphate and ADP-Glc. In Mycobacterium ulcerans (strain Agy99), this protein is Glucose-1-phosphate adenylyltransferase.